The following is a 236-amino-acid chain: Sugar fermentation stimulation protein homolog (236 aa).

This sequence belongs to the SfsA family.

The polypeptide is Sugar fermentation stimulation protein homolog (Gloeobacter violaceus (strain ATCC 29082 / PCC 7421)).